A 549-amino-acid chain; its full sequence is Glucose-6-phosphate isomerase (549 aa).

E355 acts as the Proton donor in catalysis. Active-site residues include H386 and K514.

The protein belongs to the GPI family.

The protein resides in the cytoplasm. It catalyses the reaction alpha-D-glucose 6-phosphate = beta-D-fructose 6-phosphate. Its pathway is carbohydrate biosynthesis; gluconeogenesis. The protein operates within carbohydrate degradation; glycolysis; D-glyceraldehyde 3-phosphate and glycerone phosphate from D-glucose: step 2/4. Its function is as follows. Catalyzes the reversible isomerization of glucose-6-phosphate to fructose-6-phosphate. The protein is Glucose-6-phosphate isomerase of Salmonella paratyphi A (strain AKU_12601).